The following is a 247-amino-acid chain: 1-(5-phosphoribosyl)-5-[(5-phosphoribosylamino)methylideneamino] imidazole-4-carboxamide isomerase (247 aa).

Residue Asp8 is the Proton acceptor of the active site. Asp129 acts as the Proton donor in catalysis.

This sequence belongs to the HisA/HisF family.

It localises to the cytoplasm. The enzyme catalyses 1-(5-phospho-beta-D-ribosyl)-5-[(5-phospho-beta-D-ribosylamino)methylideneamino]imidazole-4-carboxamide = 5-[(5-phospho-1-deoxy-D-ribulos-1-ylimino)methylamino]-1-(5-phospho-beta-D-ribosyl)imidazole-4-carboxamide. It participates in amino-acid biosynthesis; L-histidine biosynthesis; L-histidine from 5-phospho-alpha-D-ribose 1-diphosphate: step 4/9. This Solidesulfovibrio magneticus (strain ATCC 700980 / DSM 13731 / RS-1) (Desulfovibrio magneticus) protein is 1-(5-phosphoribosyl)-5-[(5-phosphoribosylamino)methylideneamino] imidazole-4-carboxamide isomerase.